A 1077-amino-acid polypeptide reads, in one-letter code: Serine/threonine-protein kinase sel-5 (1077 aa).

The Protein kinase domain maps to 47–317; sequence VTIEKQIAEG…IYQTSVLAFE (271 aa). ATP-binding positions include 53–61 and Lys75; that span reads IAEGGFAIV. The active-site Proton acceptor is the Asp178. Disordered regions lie at residues 347 to 444, 488 to 554, 616 to 813, and 920 to 1077; these read MRDG…TDGS, GFTD…SQVV, ELDS…TNPF, and LISV…PTDL. A compositionally biased stretch (polar residues) spans 369-399; the sequence is IQSSSKMASLSQQVPSISNISMPSGSGTVET. A compositionally biased stretch (basic and acidic residues) spans 491–515; it reads DLDKPALPRDRAQTDGKRRLPHESD. Residues 541-554 are compositionally biased toward low complexity; that stretch reads SSQQTTSKTSSQVV. Polar residues predominate over residues 638-648; it reads LTVSTSSSAQP. The segment covering 655–679 has biased composition (acidic residues); sequence TDEDDERQLLSETDEEEKYEIDEKE. Basic and acidic residues-rich tracts occupy residues 697 to 708 and 739 to 751; these read DEQRMNDRRRYS and DSRR…HDED. Positions 770–780 are enriched in acidic residues; sequence EDDGLEDDDDH. Polar residues predominate over residues 799 to 810; sequence GTSTPHTQNPIT. The segment covering 927-936 has biased composition (pro residues); it reads TDPPPPPLPK. The span at 941–950 shows a compositional bias: polar residues; that stretch reads ASPTQETTAT. The segment covering 960-969 has biased composition (basic residues); it reads KLLKKEKKKE. A compositionally biased stretch (basic and acidic residues) spans 970–989; sequence KKDGKKDKLKLEEYREKGSS. Residues 1054–1067 are compositionally biased toward polar residues; the sequence is LTGKNASFVNTSFQ.

This sequence belongs to the protein kinase superfamily. Ser/Thr protein kinase family. The cofactor is Mg(2+).

The protein localises to the cytoplasm. It catalyses the reaction L-seryl-[protein] + ATP = O-phospho-L-seryl-[protein] + ADP + H(+). It carries out the reaction L-threonyl-[protein] + ATP = O-phospho-L-threonyl-[protein] + ADP + H(+). Its function is as follows. Serine/threonine-protein kinase which may play a role in lin-12-mediated cell-fate decisions. The sequence is that of Serine/threonine-protein kinase sel-5 from Caenorhabditis elegans.